The following is a 217-amino-acid chain: Dual specificity phosphatase 29 (217 aa).

Positions 46–194 (HVNEVWPNLY…LRELDIKLAL (149 aa)) constitute a Tyrosine-protein phosphatase domain. 138–145 (HCAMGRSR) serves as a coordination point for substrate. Cysteine 139 functions as the Phosphocysteine intermediate in the catalytic mechanism.

The protein belongs to the protein-tyrosine phosphatase family. Non-receptor class dual specificity subfamily.

Its subcellular location is the cytoplasm. The protein localises to the nucleus. The enzyme catalyses O-phospho-L-tyrosyl-[protein] + H2O = L-tyrosyl-[protein] + phosphate. It catalyses the reaction O-phospho-L-seryl-[protein] + H2O = L-seryl-[protein] + phosphate. It carries out the reaction O-phospho-L-threonyl-[protein] + H2O = L-threonyl-[protein] + phosphate. In terms of biological role, dual specificity phosphatase able to dephosphorylate phosphotyrosine, phosphoserine and phosphothreonine residues within the same substrate, with a preference for phosphotyrosine as a substrate. Involved in the modulation of AMPK and MAPK1/2 signaling pathways. In Anolis carolinensis (Green anole), this protein is Dual specificity phosphatase 29 (DUSP29).